Reading from the N-terminus, the 813-residue chain is MTDLFASGDNSSNSFDDSNDEIARKNETAFKYTTIFHTNLSEKLYHELCALAFGEFDIPQGQISPLMWTRLHEIYSEVEMQTRKLPAGSNYSASSQKYANEAVQIASVLSIYTALAHEYDETVEVSLLSKLVVEDVEFRRIYALLLWSEKAISEQQYEKGLGDKVRKLEGIKSSRINSMMALKRPTFGAANAPKDASLDPDAPGTKEDQALEQMAMNVFFQLIRSGETSKAANLAIDLGMGAIGAQLQLHSMLRNPLDIPLEASKQNFGEYKRSRRAKYYQMTQKLIEQSQGSEDDAYWMLISAIRGNIQPMLKAGKSVIEKVWAYANSAVLARILAAEGAMTQETISTLFNVPLTSKSILDELRSEADRTKEVYILLRVIDDMLNDDIEDLYKFANETVGEFVPNDKNCQVNMLALDIFFHLVAVSYASGFEPNDDGNAVIILGFDDLRARSGTSSHKKMAAFYSRFLPEDMKLPEIVETMKAVDSDEEREILAESLKQSDIDFGRCACTLIEQIRKDDKTKVVTLEEQIDHWHWLLIGGEETALAALEECNRLVRKVMLSTPIDESVIRQIIRKALHFEVPKLLSQAVENEATVLSLITDGTLFEQKPGSQLAINKIEHAALEFYGLCSFVDVNNFMITIALKLGLMFKYTPITDDELSMIGGVKRLDNTTAADWEASLRVRARAEQTLREEVLKKRAAEHNTRVGMVQQHLDTVLPMLRGLVNNIGVRPEYFLSPRANGDPMRVHRKEIQEIRNLFLPQFFILLAQAAVRLDDTTNFNDFFTSFNNDLGLDQEWMVFIKAFYAELNLKVE.

It belongs to the nucleoporin Nup84/Nup107 family. As to quaternary structure, part of the nuclear pore complex (NPC). May interact with mdf-1.

It localises to the nucleus. The protein localises to the nuclear pore complex. Its subcellular location is the chromosome. It is found in the centromere. The protein resides in the kinetochore. It localises to the nucleus membrane. Functionally, involved in kinetochore assembly and chromosome segregation during embryonic mitosis. Required for the localization of the NDC80 complex member him-10, the chromosomal passenger complex component air-2 and nuclear pore complex proteins npp-23 and npp-15 to kinetochores during metaphase. Required for npp-23 localization to the nuclear envelope during interphase. Recruits mdf-1, a component of the spindle assembly checkpoint, to the nuclear envelope. Appears dispensable for the assembly of the nuclear pore complex and for nuclear protein import. The sequence is that of Nuclear pore complex protein 5 from Caenorhabditis elegans.